A 319-amino-acid chain; its full sequence is tRNA-cytidine(32) 2-sulfurtransferase (319 aa).

The PP-loop motif motif lies at 43–48; the sequence is SGGKDS. Residues cysteine 118, cysteine 121, and cysteine 209 each coordinate [4Fe-4S] cluster.

It belongs to the TtcA family. As to quaternary structure, homodimer. It depends on Mg(2+) as a cofactor. [4Fe-4S] cluster is required as a cofactor.

The protein localises to the cytoplasm. It carries out the reaction cytidine(32) in tRNA + S-sulfanyl-L-cysteinyl-[cysteine desulfurase] + AH2 + ATP = 2-thiocytidine(32) in tRNA + L-cysteinyl-[cysteine desulfurase] + A + AMP + diphosphate + H(+). It functions in the pathway tRNA modification. Functionally, catalyzes the ATP-dependent 2-thiolation of cytidine in position 32 of tRNA, to form 2-thiocytidine (s(2)C32). The sulfur atoms are provided by the cysteine/cysteine desulfurase (IscS) system. This chain is tRNA-cytidine(32) 2-sulfurtransferase, found in Neisseria meningitidis serogroup C (strain 053442).